A 379-amino-acid chain; its full sequence is L-lactate dehydrogenase (379 aa).

Residues 1-379 (MIISSSTDYR…ISPDSLVRGL (379 aa)) form the FMN hydroxy acid dehydrogenase domain. Y24 contacts substrate. FMN contacts are provided by S106 and Q127. Residue Y129 coordinates substrate. T155 is a binding site for FMN. R164 is a binding site for substrate. K251 is an FMN binding site. Residue H275 is the Proton acceptor of the active site. R278 contacts substrate. FMN is bound at residue 306 to 330 (DSGIRSGLDVVRMIAQGADGVLIGR).

Belongs to the FMN-dependent alpha-hydroxy acid dehydrogenase family. FMN serves as cofactor.

The protein localises to the cell inner membrane. It carries out the reaction (S)-lactate + A = pyruvate + AH2. Its function is as follows. Catalyzes the conversion of L-lactate to pyruvate. Is coupled to the respiratory chain. This Allorhizobium ampelinum (strain ATCC BAA-846 / DSM 112012 / S4) (Agrobacterium vitis (strain S4)) protein is L-lactate dehydrogenase.